A 236-amino-acid chain; its full sequence is Truncated formate dehydrogenase 2 (236 aa).

Residues 36-37, Asp57, 104-108, Thr130, Asp156, and 185-188 each bind NAD(+); these read RI, PLHKD, and HISG.

It belongs to the D-isomer specific 2-hydroxyacid dehydrogenase family. FDH subfamily.

This chain is Truncated formate dehydrogenase 2, found in Saccharomyces cerevisiae (strain ATCC 204508 / S288c) (Baker's yeast).